The primary structure comprises 801 residues: Putative mRNA-capping enzyme P5 (801 aa).

The protein belongs to the phytoreovirus protein P5 family.

It is found in the virion. The protein resides in the host cytoplasm. The enzyme catalyses a 5'-end diphospho-ribonucleoside in mRNA + GTP + H(+) = a 5'-end (5'-triphosphoguanosine)-ribonucleoside in mRNA + diphosphate. The protein operates within mRNA processing; mRNA capping. Enzyme involved in mRNA capping (Potential). Binds to GTP and might have guanylyltransferase activity. Together with the RNA-directed RNA polymerase P1 and protein P7, forms an transcriptional complex positioned near the channels situated at each of the five-fold vertices of the core. The protein is Putative mRNA-capping enzyme P5 of Alopecurus aequalis (Barnyard grass).